A 688-amino-acid polypeptide reads, in one-letter code: Potassium-transporting ATPase ATP-binding subunit (688 aa).

Helical transmembrane passes span 37-57, 65-85, 219-239, and 262-282; these read FIVYIASILTTVLYVFSLFGI, ILFISILLWFTVLFANFAEAI, IALQILLVSLTIIFLVVTASL, and LALLVCLAPTTIGALLSAIGI. Asp313 (4-aspartylphosphate intermediate) is an active-site residue. Residues Asp350, Glu354, 383-390, and Lys401 each bind ATP; that span reads FTAKTRMS. Residues Asp524 and Asp528 each contribute to the Mg(2+) site. The next 3 membrane-spanning stretches (helical) occupy residues 586-606, 622-642, and 668-688; these read IANDIAKYFAIIPPLFIGLFP, AILSAVIYNAFIIIFLIPLAL, and IIAPFIAIKGIDILITMLGIV.

This sequence belongs to the cation transport ATPase (P-type) (TC 3.A.3) family. Type IA subfamily. As to quaternary structure, the system is composed of three essential subunits: KdpA, KdpB and KdpC.

The protein resides in the cell membrane. The catalysed reaction is K(+)(out) + ATP + H2O = K(+)(in) + ADP + phosphate + H(+). Its function is as follows. Part of the high-affinity ATP-driven potassium transport (or Kdp) system, which catalyzes the hydrolysis of ATP coupled with the electrogenic transport of potassium into the cytoplasm. This subunit is responsible for energy coupling to the transport system and for the release of the potassium ions to the cytoplasm. The chain is Potassium-transporting ATPase ATP-binding subunit from Clostridium perfringens (strain ATCC 13124 / DSM 756 / JCM 1290 / NCIMB 6125 / NCTC 8237 / Type A).